Consider the following 378-residue polypeptide: Serpin B6 (378 aa).

Met-1 carries the N-acetylmethionine modification. Lys-196 carries the post-translational modification N6-acetyllysine.

The protein belongs to the serpin family. Ov-serpin subfamily. In terms of assembly, forms a complex with the monomeric form of beta-tryptase. Brain.

The protein localises to the cytoplasm. Its function is as follows. Inhibitor of cathepsin G, kallikrein-8 and thrombin. May play an important role in the inner ear in the protection against leakage of lysosomal content during stress. May be involved in the regulation of serine proteinases present in the brain or extravasated from the blood. This is Serpin B6 (SERPINB6) from Bos taurus (Bovine).